We begin with the raw amino-acid sequence, 132 residues long: Large ribosomal subunit protein uL14 (132 aa).

It belongs to the universal ribosomal protein uL14 family. Part of the 50S ribosomal subunit. Forms a cluster with proteins L3 and L24e, part of which may contact the 16S rRNA in 2 intersubunit bridges.

Functionally, binds to 23S rRNA. Forms part of two intersubunit bridges in the 70S ribosome. This is Large ribosomal subunit protein uL14 from Methanosarcina mazei (strain ATCC BAA-159 / DSM 3647 / Goe1 / Go1 / JCM 11833 / OCM 88) (Methanosarcina frisia).